The chain runs to 131 residues: UPF0102 protein YraN (131 aa).

A compositionally biased stretch (polar residues) spans 1–19 (MATVPTRSGSPRQLTTKQT). The segment at 1–21 (MATVPTRSGSPRQLTTKQTGD) is disordered.

It belongs to the UPF0102 family.

This chain is UPF0102 protein YraN, found in Escherichia coli (strain K12 / MC4100 / BW2952).